A 383-amino-acid polypeptide reads, in one-letter code: uncharacterized protein (383 aa).

Belongs to the peptidase M20 family.

This is an uncharacterized protein from Staphylococcus aureus (strain MRSA252).